The sequence spans 132 residues: MGLTSQLIPTLVCLLALTSTFVHGHNFNITIKEIIKTLNILTARNDTCMELTVTNIFAAPKNTTDTETFCRATTVLQQLSTHSCSNKLLGGLHRNLKTMANMTCSVNEVKKSTLRDFLERLKAIVQRKYYRH.

The signal sequence occupies residues 1–24 (MGLTSQLIPTLVCLLALTSTFVHG). N-linked (GlcNAc...) asparagine glycans are attached at residues Asn28, Asn45, Asn62, and Asn101. Disulfide bonds link Cys48–Cys84 and Cys70–Cys104.

This sequence belongs to the IL-4/IL-13 family.

It localises to the secreted. Participates in at least several B-cell activation processes as well as of other cell types. It is a costimulator of DNA-synthesis. It induces the expression of class II MHC molecules on resting B-cells. It enhances both secretion and cell surface expression of IgE and IgG1. It also regulates the expression of the low affinity Fc receptor for IgE (CD23) on both lymphocytes and monocytes. Positively regulates IL31RA expression in macrophages. Stimulates autophagy in dendritic cells by interfering with mTORC1 signaling and through the induction of RUFY4. The protein is Interleukin-4 (IL4) of Ailuropoda melanoleuca (Giant panda).